We begin with the raw amino-acid sequence, 431 residues long: Enolase (431 aa).

Position 166 (Q166) interacts with (2R)-2-phosphoglycerate. E208 serves as the catalytic Proton donor. Residues D245, E289, and D316 each coordinate Mg(2+). (2R)-2-phosphoglycerate-binding residues include K341, R370, S371, and K392. K341 acts as the Proton acceptor in catalysis.

The protein belongs to the enolase family. It depends on Mg(2+) as a cofactor.

The protein localises to the cytoplasm. Its subcellular location is the secreted. It localises to the cell surface. It carries out the reaction (2R)-2-phosphoglycerate = phosphoenolpyruvate + H2O. It participates in carbohydrate degradation; glycolysis; pyruvate from D-glyceraldehyde 3-phosphate: step 4/5. Its function is as follows. Catalyzes the reversible conversion of 2-phosphoglycerate (2-PG) into phosphoenolpyruvate (PEP). It is essential for the degradation of carbohydrates via glycolysis. The sequence is that of Enolase from Ruminiclostridium cellulolyticum (strain ATCC 35319 / DSM 5812 / JCM 6584 / H10) (Clostridium cellulolyticum).